Here is a 550-residue protein sequence, read N- to C-terminus: Lariat debranching enzyme (550 aa).

Positions 8 and 10 each coordinate a divalent metal cation. Position 28 is a phosphoserine (Ser28). Asp39 and Asn84 together coordinate a divalent metal cation. Residues 124–154 (SGIFKSHDYRKGHFECPPYNSSTIRSIYHVR) are lariat recognition loop. An N6-acetyllysine modification is found at Lys128. A divalent metal cation is bound by residues His174, His226, and His228. A disordered region spans residues 390–550 (EHHQCGEYEQ…AVDDGDASAE (161 aa)). Residues 416–426 (NTDTSALSSIN) show a composition bias toward polar residues. Over residues 430–445 (IMLDEEEEEEEEEEEA) the composition is skewed to acidic residues. Residues 450–483 (SDMNTPSVEPASDQASDLSTSFSDIRNLPSSMFV) show a composition bias toward polar residues. A phosphoserine mark is found at Ser470, Ser480, Ser484, Ser485, Ser489, Ser491, Ser494, Ser505, and Ser520. The span at 498-528 (KCGETVESGDEKDLAKFPLKRLSDEHEPEQR) shows a compositional bias: basic and acidic residues.

Belongs to the lariat debranching enzyme family. The cofactor is Fe(2+). It depends on Zn(2+) as a cofactor. Requires Mn(2+) as cofactor.

The protein localises to the nucleus. Its activity is regulated as follows. Active in presence of diverse metals including Fe(2+), Zn(2+), Mn(2+). Also activated by Ca(2+). Binds two metal cations in two adjacent alpha and beta metal-binding pockets. In terms of biological role, cleaves the 2'-5' phosphodiester linkage at the branch point of excised lariat intron RNA and converts them into linear molecules that can be subsequently degraded, thereby facilitating ribonucleotide turnover. Linked to its role in pre-mRNA processing mechanism, may also participate in retrovirus replication and have an antiviral cell-intrinsic defense function. In Mus musculus (Mouse), this protein is Lariat debranching enzyme (Dbr1).